The following is a 419-amino-acid chain: ATP phosphoribosyltransferase regulatory subunit (419 aa).

It belongs to the class-II aminoacyl-tRNA synthetase family. HisZ subfamily. Heteromultimer composed of HisG and HisZ subunits.

It localises to the cytoplasm. It functions in the pathway amino-acid biosynthesis; L-histidine biosynthesis; L-histidine from 5-phospho-alpha-D-ribose 1-diphosphate: step 1/9. In terms of biological role, required for the first step of histidine biosynthesis. May allow the feedback regulation of ATP phosphoribosyltransferase activity by histidine. The protein is ATP phosphoribosyltransferase regulatory subunit of Ruminiclostridium cellulolyticum (strain ATCC 35319 / DSM 5812 / JCM 6584 / H10) (Clostridium cellulolyticum).